The sequence spans 396 residues: Protein ANTAGONIST OF LIKE HETEROCHROMATIN PROTEIN 1 (396 aa).

Basic residues-rich tracts occupy residues 1 to 12 (MAPVKQKKKNKK) and 20 to 29 (KLAKNKEKKR). Positions 1–29 (MAPVKQKKKNKKKPLDKAKKLAKNKEKKR) are disordered. The short motif at 6–13 (QKKKNKKK) is the Nuclear localization signal element. In terms of domain architecture, DDE Tnp4 spans 183-348 (IDTTHIIMTL…IILVCCLLHN (166 aa)).

It belongs to the HARBI1 family. In terms of assembly, interacts with core components of POLYCOMB REPRESSIVE COMPLEX 2 (PRC2), a PcG protein complex with H3K27me3 histone methyltransferase activity. Associates with plant-specific PRC2 accessory components such as MSI1, EMF2, VRN2, FIE and CLF. It depends on a divalent metal cation as a cofactor. In terms of tissue distribution, expressed in roots, inflorescence stems, seedlings, leaves, flower buds, inflorescences, and siliques.

It is found in the nucleus. In terms of biological role, transposase-derived protein that may have nuclease activity. Antagonist of polycomb-group (PcG) protein-mediated chromatin silencing, probably by preventing the association of POLYCOMB REPRESSIVE COMPLEX 2 (PRC2) with its accessory components. Needed for full reactivation of several floral homeotic genes that are repressed by PcG. The polypeptide is Protein ANTAGONIST OF LIKE HETEROCHROMATIN PROTEIN 1 (Arabidopsis thaliana (Mouse-ear cress)).